The primary structure comprises 482 residues: Anaerobic nitric oxide reductase flavorubredoxin (482 aa).

The tract at residues 30–210 is zinc metallo-hydrolase; the sequence is LRGSSYNSYL…PFSRLVTPKI (181 aa). Residues histidine 79, glutamate 81, aspartate 83, histidine 147, aspartate 166, and histidine 227 each coordinate Fe cation. Positions 254–393 constitute a Flavodoxin-like domain; it reads ITIFYDTMSN…LCRQHGRDIA (140 aa). FMN-binding positions include 260–264 and 342–369; these read TMSNN and AFGS…EMSL. One can recognise a Rubredoxin-like domain in the interval 426–477; sequence GPSMQCSVCQWIYDPAKGEPLQDVAPGTPWSDVPDNFLCPECSLGKDVFDVL. 4 residues coordinate Fe cation: cysteine 431, cysteine 434, cysteine 464, and cysteine 467.

In the N-terminal section; belongs to the zinc metallo-hydrolase group 3 family. Homotetramer. Fe cation is required as a cofactor. Requires FMN as cofactor.

The protein localises to the cytoplasm. The protein operates within nitrogen metabolism; nitric oxide reduction. Its function is as follows. Anaerobic nitric oxide reductase; uses NADH to detoxify nitric oxide (NO), protecting several 4Fe-4S NO-sensitive enzymes. Has at least 2 reductase partners, only one of which (NorW, flavorubredoxin reductase) has been identified. NO probably binds to the di-iron center; electrons enter from the NorW at rubredoxin and are transferred sequentially to the FMN center and the di-iron center. Also able to function as an aerobic oxygen reductase. The protein is Anaerobic nitric oxide reductase flavorubredoxin of Citrobacter koseri (strain ATCC BAA-895 / CDC 4225-83 / SGSC4696).